Reading from the N-terminus, the 1019-residue chain is Pleckstrin homology domain-containing family M member 2 (1019 aa).

Residue methionine 1 is modified to N-acetylmethionine. The interval 1–310 (MEPGEVKDRI…LDPPDACTEL (310 aa)) is interaction with KIF5B. One can recognise an RUN domain in the interval 36 to 158 (RNHDKVLQRL…IRFELDLDAP (123 aa)). 3 disordered regions span residues 230 to 458 (SVPS…SEGL), 471 to 525 (SPST…REAQ), and 557 to 581 (QPSPCLSSAEDSGVDEGQGSPSEMV). Polar residues-rich tracts occupy residues 243-272 (DTVSGPRSTASDLTSSKASTRSPTQRQNPF) and 279-291 (TVSSSDTTPVHTT). The span at 315-327 (VTKKKKIGKKKKS) shows a compositional bias: basic residues. Polar residues predominate over residues 417-427 (LNGQLDPSTWC). Position 441 is a phosphoserine (serine 441). The segment covering 516 to 525 (PLEDTTREAQ) has biased composition (basic and acidic residues). An interaction with sifA region spans residues 762 to 885 (PCHCSPPEGT…VIPQGVAPSP (124 aa)). The PH domain maps to 771–873 (TITKEGMLHY…WMQHLCQAVS (103 aa)).

Interacts with KLC2 (via TPR repeats). Interacts with KIF5B. Interacts with BORCS5. Interacts (via RUN domain) with ARL8B (GTP-bound form); PLEKHM1 and PLEKHM2 compete for interaction with ARL8B. Interacts with ARL8A. In terms of assembly, (Microbial infection) Interacts with the S.typhimurium sifA protein; required for S.typhimurium infection.

The protein resides in the cytoplasm. The protein localises to the lysosome membrane. Its function is as follows. Plays a role in lysosomes movement and localization at the cell periphery acting as an effector of ARL8B. Required for ARL8B to exert its effects on lysosome location, recruits kinesin-1 to lysosomes and hence direct their movement toward microtubule plus ends. Binding to ARL8B provides a link from lysosomal membranes to plus-end-directed motility. Critical factor involved in NK cell-mediated cytotoxicity. Drives the polarization of cytolytic granules and microtubule-organizing centers (MTOCs) toward the immune synapse between effector NK lymphocytes and target cells. Required for maintenance of the Golgi apparatus organization. May play a role in membrane tubulation. This is Pleckstrin homology domain-containing family M member 2 from Homo sapiens (Human).